Here is a 174-residue protein sequence, read N- to C-terminus: Urease accessory protein UreE (174 aa).

The protein belongs to the UreE family.

It is found in the cytoplasm. In terms of biological role, involved in urease metallocenter assembly. Binds nickel. Probably functions as a nickel donor during metallocenter assembly. This Helicobacter hepaticus (strain ATCC 51449 / 3B1) protein is Urease accessory protein UreE.